The sequence spans 33 residues: Protein YtiC (33 aa).

A helical membrane pass occupies residues 10–29; it reads FDMLSIYIIYKLIVSNNTWL.

The protein localises to the cell inner membrane. The polypeptide is Protein YtiC (Escherichia coli (strain K12)).